We begin with the raw amino-acid sequence, 160 residues long: Large ribosomal subunit protein uL16 (160 aa).

Residues 138-148 (KNLEVSSQENT) show a composition bias toward polar residues. Residues 138–160 (KNLEVSSQENTKNNKESQEEVKQ) form a disordered region. The span at 149–160 (KNNKESQEEVKQ) shows a compositional bias: basic and acidic residues.

The protein belongs to the universal ribosomal protein uL16 family. Part of the 50S ribosomal subunit.

Binds 23S rRNA and is also seen to make contacts with the A and possibly P site tRNAs. The sequence is that of Large ribosomal subunit protein uL16 from Prochlorococcus marinus (strain MIT 9312).